Here is a 275-residue protein sequence, read N- to C-terminus: MMSELLQQQTWRVIDHTSLGPSFDAKQSFAFDDALCESVGSGQSQPVVRLWVHHQTVVLGIQDTKLPYIEKGLAYLHEQGWRTIVRNSGGLAVVLDEGVLNVSLIFPDTKKGIDIDRGYEAMATLIAHMLPEAHVQTGEVVGSYCPGSFDLSINGKKFAGISQRRIRGGVAVQVYICVNGSGAERAGWIREFYERSLAGEQTKFTYPTIVPHTMASLSELLSKEMTVSALVIRLYEALQAFGSRLEPSSLTPAEWERYYMYFQRMIDRNETMLPT.

In terms of domain architecture, BPL/LPL catalytic spans 42 to 246; the sequence is GQSQPVVRLW…ALQAFGSRLE (205 aa). C145 acts as the Acyl-thioester intermediate in catalysis.

Belongs to the octanoyltransferase LipL family.

The enzyme catalyses N(6)-octanoyl-L-lysyl-[glycine-cleavage complex H protein] + L-lysyl-[lipoyl-carrier protein] = N(6)-octanoyl-L-lysyl-[lipoyl-carrier protein] + L-lysyl-[glycine-cleavage complex H protein]. It participates in protein modification; protein lipoylation via endogenous pathway; protein N(6)-(lipoyl)lysine from octanoyl-[acyl-carrier-protein]. Catalyzes the amidotransfer (transamidation) of the octanoyl moiety from octanoyl-GcvH to the lipoyl domain of the E2 subunit of lipoate-dependent enzymes. This is Octanoyl-[GcvH]:protein N-octanoyltransferase from Anoxybacillus flavithermus (strain DSM 21510 / WK1).